Consider the following 375-residue polypeptide: Enoyl-[acyl-carrier-protein] reductase [NADH] 1, chloroplastic (375 aa).

The transit peptide at 1–67 directs the protein to the chloroplast; sequence MGASAATGMQ…SSKRSGVAIR (67 aa). NAD(+)-binding positions include Gly-91, Tyr-98, 155-156, 202-203, and Leu-252; these read DA and SL. Residues Tyr-254 and Tyr-264 each act as proton acceptor in the active site. Residues Lys-272 and 302–306 each bind NAD(+); that span reads LGSRA.

This sequence belongs to the short-chain dehydrogenases/reductases (SDR) family. FabI subfamily. Homotetramer.

The protein localises to the plastid. It is found in the chloroplast. The catalysed reaction is a 2,3-saturated acyl-[ACP] + NAD(+) = a (2E)-enoyl-[ACP] + NADH + H(+). Its pathway is lipid metabolism; fatty acid biosynthesis. Its function is as follows. Catalyzes the NAD-dependent reduction of a carbon-carbon double bond in an enoyl moiety that is covalently linked to an acyl carrier protein (ACP). Catalyzes the last reduction step in the de novo synthesis cycle of fatty acids. Involved in the elongation cycle of fatty acids which are used in lipid metabolism. Required for normal plant growth. The chain is Enoyl-[acyl-carrier-protein] reductase [NADH] 1, chloroplastic from Oryza sativa subsp. japonica (Rice).